Reading from the N-terminus, the 498-residue chain is ATP synthase subunit beta, chloroplastic (498 aa).

Residue 172–179 (GGAGVGKT) participates in ATP binding.

Belongs to the ATPase alpha/beta chains family. As to quaternary structure, F-type ATPases have 2 components, CF(1) - the catalytic core - and CF(0) - the membrane proton channel. CF(1) has five subunits: alpha(3), beta(3), gamma(1), delta(1), epsilon(1). CF(0) has four main subunits: a(1), b(1), b'(1) and c(9-12).

It is found in the plastid. The protein localises to the chloroplast thylakoid membrane. The catalysed reaction is ATP + H2O + 4 H(+)(in) = ADP + phosphate + 5 H(+)(out). Produces ATP from ADP in the presence of a proton gradient across the membrane. The catalytic sites are hosted primarily by the beta subunits. This chain is ATP synthase subunit beta, chloroplastic, found in Sorghum bicolor (Sorghum).